The sequence spans 480 residues: Ribosome assembly protein rrb1 (480 aa).

Disordered stretches follow at residues 1 to 78 and 155 to 176; these read MSKR…WLPG and QHDENDDASDNSDVEEDPILEH. Composition is skewed to acidic residues over residues 28-52 and 158-172; these read VDTEMGEFEDAYEDEIESEEEYIEA and ENDDASDNSDVEEDP. Residues serine 163 and serine 166 each carry the phosphoserine modification. WD repeat units lie at residues 183–225, 289–329, 334–375, 385–425, and 446–480; these read GACN…RSLD, SHTA…KTSA, AHPG…SSSS, WHRA…DEEE, and MGQQEIKEMHWHRQIPGTIVSTAMTGINVFKTITF.

In terms of assembly, associates with ribosomal protein L3.

It localises to the cytoplasm. Its subcellular location is the nucleus. The protein resides in the nucleolus. In terms of biological role, involved in regulation of L3 expression and stability and plays a role in early 60S ribosomal subunit assembly. May be required for proper assembly of pre-ribosomal particles during early ribosome biogenesis, presumably by targeting L3 onto the 35S precursor rRNA. The protein is Ribosome assembly protein rrb1 (rrb1) of Schizosaccharomyces pombe (strain 972 / ATCC 24843) (Fission yeast).